Consider the following 69-residue polypeptide: Mitotic-spindle organizing protein 1 (69 aa).

The protein belongs to the MOZART1 family. Part of the gamma-tubulin complex.

The protein resides in the cytoplasm. Its subcellular location is the cytoskeleton. The protein localises to the microtubule organizing center. It is found in the spindle. Required for gamma-tubulin complex recruitment to the microtubule organizing centers (MTOCs). This is Mitotic-spindle organizing protein 1 from Picea sitchensis (Sitka spruce).